Here is a 69-residue protein sequence, read N- to C-terminus: uncharacterized protein (69 aa).

Positions 23–46 are disordered; sequence AENEGNRKENRRQMQSRNERGCNV. Residues 26 to 44 show a composition bias toward basic and acidic residues; sequence EGNRKENRRQMQSRNERGC.

This is an uncharacterized protein from Homo sapiens (Human).